A 556-amino-acid chain; its full sequence is Formate--tetrahydrofolate ligase (556 aa).

64-71 (TPAGEGKT) is a binding site for ATP.

The protein belongs to the formate--tetrahydrofolate ligase family.

It carries out the reaction (6S)-5,6,7,8-tetrahydrofolate + formate + ATP = (6R)-10-formyltetrahydrofolate + ADP + phosphate. Its pathway is one-carbon metabolism; tetrahydrofolate interconversion. This chain is Formate--tetrahydrofolate ligase, found in Haemophilus ducreyi (strain 35000HP / ATCC 700724).